We begin with the raw amino-acid sequence, 545 residues long: Resolvase homolog YokA (545 aa).

A Resolvase/invertase-type recombinase catalytic domain is found at Asn14–Gly165. Residues Leu19 to Lys46 adopt a coiled-coil conformation. Catalysis depends on Ser22, which acts as the O-(5'-phospho-DNA)-serine intermediate. Positions Pro173–Leu303 form a DNA-binding region, recombinase. The stretch at Asn402–Asn475 forms a coiled coil.

This sequence in the N-terminal section; belongs to the site-specific recombinase resolvase family.

The polypeptide is Resolvase homolog YokA (yokA) (Bacillus subtilis (strain 168)).